Consider the following 98-residue polypeptide: Large ribosomal subunit protein uL23 (98 aa).

It belongs to the universal ribosomal protein uL23 family. In terms of assembly, part of the 50S ribosomal subunit. Contacts protein L29, and trigger factor when it is bound to the ribosome.

In terms of biological role, one of the early assembly proteins it binds 23S rRNA. One of the proteins that surrounds the polypeptide exit tunnel on the outside of the ribosome. Forms the main docking site for trigger factor binding to the ribosome. The chain is Large ribosomal subunit protein uL23 from Streptococcus sanguinis (strain SK36).